The sequence spans 225 residues: UPF0758 protein BB3258 (225 aa).

Positions Ala103–Leu225 constitute an MPN domain. Zn(2+) is bound by residues His174, His176, and Asp187. A JAMM motif motif is present at residues His174 to Asp187.

The protein belongs to the UPF0758 family.

In Bordetella bronchiseptica (strain ATCC BAA-588 / NCTC 13252 / RB50) (Alcaligenes bronchisepticus), this protein is UPF0758 protein BB3258.